The following is a 355-amino-acid chain: MSQRKIIHVDMDAFYASVEQRDRPGLRGRPVVVGGDPNGRGVVAAASYEARRHGIHSAMPAWRAARLCPDAVFLRPRFDVYRSISAQIQALFREYTPLVEPLSLDEAYLDVSDCPRRGGSATLIAREIRARIHEQTGLTASAGVSCNKFLAKIASDLDKPDGLHVIPPEQAEAFVAALPVGKIHGVGQATRQRMERMGVRTGADLRRLTLLELQRAFGSRARFYYELARGRDERPVRPRRERKSVGAETTFGEDLNNPAEMLERMAPLADKVAASLHRRGLAGRTVTLKVKYHDFRQITRSLSGRPVQSADEIRARLPALLQDTEAGDRPVRLLGVTVSGLVTVTPDQARQLALF.

Positions 6–187 (IIHVDMDAFY…LPVGKIHGVG (182 aa)) constitute a UmuC domain. 2 residues coordinate Mg(2+): D10 and D105. E106 is an active-site residue.

It belongs to the DNA polymerase type-Y family. In terms of assembly, monomer. Mg(2+) serves as cofactor.

It is found in the cytoplasm. The catalysed reaction is DNA(n) + a 2'-deoxyribonucleoside 5'-triphosphate = DNA(n+1) + diphosphate. In terms of biological role, poorly processive, error-prone DNA polymerase involved in untargeted mutagenesis. Copies undamaged DNA at stalled replication forks, which arise in vivo from mismatched or misaligned primer ends. These misaligned primers can be extended by PolIV. Exhibits no 3'-5' exonuclease (proofreading) activity. May be involved in translesional synthesis, in conjunction with the beta clamp from PolIII. This chain is DNA polymerase IV, found in Alkalilimnicola ehrlichii (strain ATCC BAA-1101 / DSM 17681 / MLHE-1).